The chain runs to 292 residues: Small ribosomal subunit protein uS5 (292 aa).

The tract at residues 1-56 (MADDAGAAGGPGGPGGPGMGGRGGFRGGFGSGIRGRGRGRGRGRGRGRGARGGKAE) is disordered. At Ala-2 the chain carries N-acetylalanine. Gly residues predominate over residues 7–34 (AAGGPGGPGGPGMGGRGGFRGGFGSGIR). The segment covering 35-51 (GRGRGRGRGRGRGRGAR) has biased composition (basic residues). Glycyl lysine isopeptide (Lys-Gly) (interchain with G-Cter in ubiquitin) cross-links involve residues Lys-54 and Lys-58. An S5 DRBM domain is found at 102–165 (LKDEVLKIMP…ILAKLSIVPV (64 aa)). A Phosphothreonine modification is found at Thr-251. Position 262 is an N6-acetyllysine (Lys-262). Ser-263 carries the post-translational modification Phosphoserine. Thr-269 carries the post-translational modification Phosphothreonine. Lys-274 bears the N6-acetyllysine; alternate mark. Lys-274 is covalently cross-linked (Glycyl lysine isopeptide (Lys-Gly) (interchain with G-Cter in SUMO1); alternate). Residue Lys-274 forms a Glycyl lysine isopeptide (Lys-Gly) (interchain with G-Cter in SUMO2); alternate linkage. Lys-274 is covalently cross-linked (Glycyl lysine isopeptide (Lys-Gly) (interchain with G-Cter in ubiquitin); alternate). Ser-280 carries the post-translational modification Phosphoserine.

It belongs to the universal ribosomal protein uS5 family. In terms of assembly, component of the small ribosomal subunit. Interacts with zinc finger protein ZNF277 (via zinc-finger domains); the interaction is direct; the interaction is extra-ribosomal. Interaction with ZNF277 competes with the binding of RPS2 to protein arginine methyltransferase PRMT3. Citrullinated by PADI4 in the Arg/Gly-rich region. In terms of processing, asymmetric arginine dimethylation by PRMT3 occurs at multiple sites in the Arg/Gly-rich region. Post-translationally, monoubiquitinated at Lys-54 and Lys-58 by RNF10 when a ribosome has stalled during translation, leading to its degradation by the proteasome. Deubiquitinated at Lys-54 and Lys-58 by USP10, preventing degradation by the proteasome and promoting 40S ribosome subunit recycling following ribosome dissociation.

The protein localises to the cytoplasm. It localises to the nucleus. It is found in the nucleolus. Functionally, component of the ribosome, a large ribonucleoprotein complex responsible for the synthesis of proteins in the cell. The small ribosomal subunit (SSU) binds messenger RNAs (mRNAs) and translates the encoded message by selecting cognate aminoacyl-transfer RNA (tRNA) molecules. The large subunit (LSU) contains the ribosomal catalytic site termed the peptidyl transferase center (PTC), which catalyzes the formation of peptide bonds, thereby polymerizing the amino acids delivered by tRNAs into a polypeptide chain. The nascent polypeptides leave the ribosome through a tunnel in the LSU and interact with protein factors that function in enzymatic processing, targeting, and the membrane insertion of nascent chains at the exit of the ribosomal tunnel. Plays a role in the assembly and function of the 40S ribosomal subunit. The chain is Small ribosomal subunit protein uS5 (RPS2) from Oryctolagus cuniculus (Rabbit).